The following is a 411-amino-acid chain: Adenylosuccinate synthetase (411 aa).

GTP is bound by residues 11-17 and 39-41; these read GDEGKGK and GHT. The active-site Proton acceptor is the D12. Positions 12 and 39 each coordinate Mg(2+). IMP-binding positions include 12–15, 37–40, T121, R135, Q215, T230, and R294; these read DEGK and NAGH. The Proton donor role is filled by H40. Substrate is bound at residue 290–296; sequence TTTKRPR. GTP-binding positions include R296, 322–324, and 400–402; these read KLD and STS.

This sequence belongs to the adenylosuccinate synthetase family. Homodimer. The cofactor is Mg(2+).

It localises to the cytoplasm. It carries out the reaction IMP + L-aspartate + GTP = N(6)-(1,2-dicarboxyethyl)-AMP + GDP + phosphate + 2 H(+). It functions in the pathway purine metabolism; AMP biosynthesis via de novo pathway; AMP from IMP: step 1/2. Plays an important role in the de novo pathway of purine nucleotide biosynthesis. Catalyzes the first committed step in the biosynthesis of AMP from IMP. The chain is Adenylosuccinate synthetase from Helicobacter pylori (strain Shi470).